The following is a 553-amino-acid chain: Arginine--tRNA ligase (553 aa).

The 'HIGH' region signature appears at 130 to 140 (ANPTGDLHIGH).

It belongs to the class-I aminoacyl-tRNA synthetase family. Monomer.

Its subcellular location is the cytoplasm. It carries out the reaction tRNA(Arg) + L-arginine + ATP = L-arginyl-tRNA(Arg) + AMP + diphosphate. The chain is Arginine--tRNA ligase from Staphylococcus aureus (strain bovine RF122 / ET3-1).